A 394-amino-acid polypeptide reads, in one-letter code: Class II hydrophobin TH1 (394 aa).

The first 16 residues, 1 to 16, serve as a signal peptide directing secretion; it reads MKFLAAASLLVASTLA. Residues 17–42 form a disordered region; that stretch reads VPTSSGGSCRPRPPPGGGNGGNGGNG. The segment covering 33-42 has biased composition (gly residues); sequence GGNGGNGGNG. Residues 48–117 are hydrophobin 1; it reads GYQPCPAGLY…GQAVLCQDSI (70 aa). 4 cysteine pairs are disulfide-bonded: C52-C101, C62-C92, C63-C75, and C102-C113. The interval 135-157 is disordered; it reads GNGGNNGGNTDYPGGNGGNNGGN. Positions 148–157 are enriched in gly residues; the sequence is GGNGGNNGGN. Hydrophobin stretches follow at residues 200–270 and 326–394; these read GYQA…QPAI and GSFK…CTGA.

The protein belongs to the cerato-ulmin hydrophobin family. In terms of assembly, homotetramer. Further self-assembles to form highly ordered films at water-air interfaces through intermolecular interactions. In terms of processing, several N-termini starting at positions 17, 20, 22, 28 and 48 have been identified by direct sequencing. Contains a number of intrachain disulfide bonds. Post-translationally, not glycosylated.

Its subcellular location is the secreted. The protein resides in the cell wall. Aerial growth, conidiation, and dispersal of filamentous fungi in the environment rely upon a capability of their secreting small amphipathic proteins called hydrophobins (HPBs) with low sequence identity. Class I can self-assemble into an outermost layer of rodlet bundles on aerial cell surfaces, conferring cellular hydrophobicity that supports fungal growth, development and dispersal; whereas Class II form highly ordered films at water-air interfaces through intermolecular interactions but contribute nothing to the rodlet structure. TH1 is a class II hydrophobin that reduces water surface tension dramatically upon assembly at the water-air interface and plays a role in the formation of aerial hyphae. The polypeptide is Class II hydrophobin TH1 (TH1) (Claviceps fusiformis (Ergot fungus)).